The chain runs to 600 residues: Adenine deaminase (600 aa).

The protein belongs to the metallo-dependent hydrolases superfamily. Adenine deaminase family. It depends on Mn(2+) as a cofactor.

The catalysed reaction is adenine + H2O + H(+) = hypoxanthine + NH4(+). The sequence is that of Adenine deaminase from Bradyrhizobium sp. (strain BTAi1 / ATCC BAA-1182).